Reading from the N-terminus, the 178-residue chain is Caveolin-1 (178 aa).

The residue at position 2 (Ser-2) is an N-acetylserine. Ser-2 carries the post-translational modification Phosphoserine. A required for homooligomerization region spans residues 2-94 (SGGKYVDSEG…WKASFTTFTV (93 aa)). Residues 2 to 104 (SGGKYVDSEG…TKYWFYRLLS (103 aa)) are Cytoplasmic-facing. Lys-5 carries the post-translational modification N6-acetyllysine; alternate. A Glycyl lysine isopeptide (Lys-Gly) (interchain with G-Cter in ubiquitin); alternate cross-link involves residue Lys-5. Tyr-6 bears the Phosphotyrosine mark. Ser-9 is subject to Phosphoserine. Tyr-14 carries the phosphotyrosine; by ABL1 modification. At Tyr-25 the chain carries Phosphotyrosine. Residues Lys-26, Lys-30, Lys-39, Lys-47, and Lys-57 each participate in a glycyl lysine isopeptide (Lys-Gly) (interchain with G-Cter in ubiquitin) cross-link. Residues 82 to 94 (DGIWKASFTTFTV) are interaction with CAVIN3. The segment at residues 105–125 (TLFGIPMALIWGIYFAILSFL) is an intramembrane region (helical). The Cytoplasmic segment spans residues 126-178 (HIWAVVPCIKSFLIEIQCIGRVYSIYIHTFCDPLFEAVGKLFSNIRINMQKEI). Residues 131–142 (VPCIKSFLIEIQ) are interacts with SPRY1, SPRY2, SPRY3 and SPRY4. 3 S-palmitoyl cysteine lipidation sites follow: Cys-133, Cys-143, and Cys-156. The tract at residues 149–160 (SIYIHTFCDPLF) is interacts with SPRY1, SPRY2, and SPRY4. The interval 167-178 (FSNIRINMQKEI) is interacts with SPRY1, SPRY2, SPRY3 and SPRY4.

The protein belongs to the caveolin family. In terms of assembly, homooligomer. Interacts with GLIPR2. Interacts with NOSTRIN. Interacts with SNAP25 and STX1A. Interacts (via the N-terminus) with DPP4; the interaction is direct. Interacts with CTNNB1, CDH1 and JUP. Interacts with PACSIN2; this interaction induces membrane tubulation. Interacts with SLC7A9. Interacts with BMX and BTK. Interacts with TGFBR1. Interacts with CAVIN3 (via leucine-zipper domain) in a cholesterol-sensitive manner. Interacts with CAVIN1. Interacts with EHD2 in a cholesterol-dependent manner. Forms a ternary complex with UBXN6 and VCP; mediates CAV1 targeting to lysosomes for degradation. Interacts with ABCG1; this interaction regulates ABCG1-mediated cholesterol efflux. Interacts with NEU3; this interaction enhances NEU3 sialidase activity within caveola. Interacts (via C-terminus) with SPRY1, SPRY2 (via C-terminus), SPRY3, and SPRY4. Interacts with IGFBP5; this interaction allows trafficking of IGFBP5 from the plasma membrane to the nucleus. Post-translationally, phosphorylated at Tyr-14 by ABL1 in response to oxidative stress. Ubiquitinated. Undergo monoubiquitination and multi- and/or polyubiquitination. Monoubiquitination of N-terminal lysines promotes integration in a ternary complex with UBXN6 and VCP which promotes oligomeric CAV1 targeting to lysosomes for degradation. Ubiquitinated by ZNRF1; leading to degradation and modulation of the TLR4-mediated immune response.

Its subcellular location is the golgi apparatus membrane. It localises to the cell membrane. The protein resides in the membrane. It is found in the caveola. The protein localises to the membrane raft. In terms of biological role, may act as a scaffolding protein within caveolar membranes. Forms a stable heterooligomeric complex with CAV2 that targets to lipid rafts and drives caveolae formation. Mediates the recruitment of CAVIN proteins (CAVIN1/2/3/4) to the caveolae. Interacts directly with G-protein alpha subunits and can functionally regulate their activity. Involved in the costimulatory signal essential for T-cell receptor (TCR)-mediated T-cell activation. Its binding to DPP4 induces T-cell proliferation and NF-kappa-B activation in a T-cell receptor/CD3-dependent manner. Recruits CTNNB1 to caveolar membranes and may regulate CTNNB1-mediated signaling through the Wnt pathway. Negatively regulates TGFB1-mediated activation of SMAD2/3 by mediating the internalization of TGFBR1 from membrane rafts leading to its subsequent degradation. Binds 20(S)-hydroxycholesterol (20(S)-OHC). In Dasypus novemcinctus (Nine-banded armadillo), this protein is Caveolin-1 (CAV1).